Consider the following 1032-residue polypeptide: Toll-like receptor 9 (1032 aa).

An N-terminal signal peptide occupies residues 1–25 (MGFCRSALHPLSLLVQAIMLAMTLA). At 26-818 (LGTLPAFLPC…CLDEALSWDC (793 aa)) the chain is on the extracellular side. Cys35 and Cys45 are joined by a disulfide. Residue 47–51 (WLFLK) coordinates DNA. LRR repeat units follow at residues 62–85 (RGNV…DFAH), 87–110 (PSLR…HFPC), 122–147 (VPTL…SLIS), 150–166 (LSHT…LAGL), 167–190 (HALR…ALEV), 198–221 (LGNL…LPSS), 223–242 (EYLL…DLAN), 243–268 (LTAL…CMEC), 283–306 (LSRL…WFRG), 308–332 (GNLR…AFQG), 333–356 (LTQL…HLSL), 363–386 (LVAL…TLRP), 390–413 (LPML…IFRA), and 415–440 (PGLR…MGEA). The N-linked (GlcNAc...) asparagine glycan is linked to Asn64. DNA is bound by residues 72–77 (SNRIHH) and 95–109 (KWNC…MHFP). The cysteines at positions 98 and 110 are disulfide-linked. Residue Asn129 is glycosylated (N-linked (GlcNAc...) asparagine). Tyr132 lines the DNA pocket. A disulfide bond links Cys178 and Cys184. 179–181 (YYK) provides a ligand contact to DNA. The N-linked (GlcNAc...) asparagine glycan is linked to Asn200. Tyr208 contributes to the DNA binding site. 2 N-linked (GlcNAc...) asparagine glycosylation sites follow: Asn210 and Asn242. Intrachain disulfides connect Cys255-Cys268 and Cys258-Cys265. Residues Cys258 and Cys265 are each lipidated (S-palmitoyl cysteine). Residue Asn300 is glycosylated (N-linked (GlcNAc...) asparagine). An N-linked (GlcNAc...) asparagine glycan is attached at Asn340. Residues Asn469, Asn474, and Asn513 are each glycosylated (N-linked (GlcNAc...) asparagine). 12 LRR repeats span residues 470–494 (CSTL…MFAQ), 496–519 (SHLQ…QFLP), 520–543 (LTGL…SFTE), 545–572 (PRLE…SFVA), 574–598 (LRTL…LCST), 600–622 (LRAL…LYLH), 627–650 (LSGL…TLRN), 652–675 (PKSL…SLHF), 676–699 (LPKL…SLPA), 701–723 (TRLR…FFSK), 724–747 (AKEL…WFGP), and 749–772 (ASAL…AFMD). Cys470 and Cys500 are joined by a disulfide. Asn567 is a glycosylation site (N-linked (GlcNAc...) asparagine). N-linked (GlcNAc...) asparagine glycosylation occurs at Asn694. Asn731 is a glycosylation site (N-linked (GlcNAc...) asparagine). 2 cysteine pairs are disulfide-bonded: Cys764/Cys790 and Cys766/Cys809. Residues 819-839 (FALSLLAVALGLGVPMLHHLC) traverse the membrane as a helical segment. Residues 840–1032 (GWDLWYCFHL…RNFCQGPTAE (193 aa)) lie on the Cytoplasmic side of the membrane. The region spanning 868–1013 (LPYDAFVVFD…SFWAQLGMAL (146 aa)) is the TIR domain.

The protein belongs to the Toll-like receptor family. Monomer and homodimer. Exists as a monomer in the absence of unmethylated cytidine-phosphate-guanosine (CpG) ligand. Proteolytic processing of an insertion loop (Z-loop) is required for homodimerization upon binding to the unmethylated CpG ligand leading to its activation. Interacts with MYD88 via their respective TIR domains. Interacts with BTK. Interacts (via transmembrane domain) with UNC93B1. Interacts with CD300LH; the interaction may promote full activation of TLR9-triggered innate responses. Interacts with CNPY3 and HSP90B1; this interaction is required for proper folding in the endoplasmic reticulum. Interacts with SMPDL3B. Interacts with CD82; this interaction is essential for TLR9-dependent myddosome formation in response to CpG stimulation. Activated by proteolytic cleavage of the flexible loop between repeats LRR14 and LRR15 within the ectodomain. Cleavage requires UNC93B1. Proteolytically processed by first removing the majority of the ectodomain by either asparagine endopeptidase (AEP) or a cathepsin followed by a trimming event that is solely cathepsin mediated and required for optimal receptor signaling. In terms of processing, palmitoylated by ZDHHC3 in the Golgi regulates TLR9 trafficking from the Golgi to endosomes. Depalmitoylation by PPT1 controls the release of TLR9 from UNC93B1 in endosomes. In terms of tissue distribution, highly expressed in spleen, lymph node, tonsil and peripheral blood leukocytes, especially in plasmacytoid pre-dendritic cells. Levels are much lower in monocytes and CD11c+ immature dendritic cells. Also detected in lung and liver.

The protein resides in the endoplasmic reticulum membrane. It is found in the early endosome membrane. The protein localises to the lysosome. It localises to the cytoplasmic vesicle. Its subcellular location is the phagosome. The protein resides in the golgi apparatus membrane. In terms of biological role, key component of innate and adaptive immunity. TLRs (Toll-like receptors) control host immune response against pathogens through recognition of molecular patterns specific to microorganisms. TLR9 is a nucleotide-sensing TLR which is activated by unmethylated cytidine-phosphate-guanosine (CpG) dinucleotides. Acts via MYD88 and TRAF6, leading to NF-kappa-B activation, cytokine secretion and the inflammatory response. Controls lymphocyte response to Helicobacter infection. Upon CpG stimulation, induces B-cell proliferation, activation, survival and antibody production. In Homo sapiens (Human), this protein is Toll-like receptor 9 (TLR9).